Here is a 194-residue protein sequence, read N- to C-terminus: MSGVLIAVAALLALAAVFGAVLGFASEKFKVEGDPIVDQIDSLLPQTQCGQCGHPGCRPYAEAIAEGEEHNRCPPGGQDTVVALSELLGREELTLDDEGAEDANVAKVAYIREDECIGCTKCIQACPVDAIVGAAKLMHTVIVDECTGCDLCVEPCPVDCIDMLEVKPTLQTWGWQRPAGIGERPDSRIEVVNL.

The hydrophobic stretch occupies residues 1-26 (MSGVLIAVAALLALAAVFGAVLGFAS). One can recognise a 4Fe-4S domain in the interval 32–90 (EGDPIVDQIDSLLPQTQCGQCGHPGCRPYAEAIAEGEEHNRCPPGGQDTVVALSELLGR). [4Fe-4S] cluster contacts are provided by Cys-49, Cys-52, Cys-57, Cys-73, Cys-116, Cys-119, Cys-122, Cys-126, Cys-146, Cys-149, Cys-152, and Cys-156. 2 consecutive 4Fe-4S ferredoxin-type domains span residues 107-136 (KVAY…GAAK) and 137-166 (LMHT…MLEV).

This sequence belongs to the 4Fe4S bacterial-type ferredoxin family. RnfB subfamily. As to quaternary structure, the complex is composed of six subunits: RnfA, RnfB, RnfC, RnfD, RnfE and RnfG. It depends on [4Fe-4S] cluster as a cofactor.

It localises to the cell inner membrane. Part of a membrane-bound complex that couples electron transfer with translocation of ions across the membrane. The polypeptide is Ion-translocating oxidoreductase complex subunit B (Alcanivorax borkumensis (strain ATCC 700651 / DSM 11573 / NCIMB 13689 / SK2)).